We begin with the raw amino-acid sequence, 793 residues long: Short transient receptor potential channel 1 (793 aa).

The disordered stretch occupies residues 1-30; it reads MMAALYPSTDLSGASSSSLPSSPSSSSPNE. Residues 1 to 345 lie on the Cytoplasmic side of the membrane; the sequence is MMAALYPSTD…FGQMSGYRRK (345 aa). Residues 15–28 show a composition bias toward low complexity; sequence SSSSLPSSPSSSSP. ANK repeat units lie at residues 46-75, 83-109, 111-156, and 158-180; these read LNEKLFLLACDKGDYYMVKEILEENSSGDL, LGRNAVTITIENENLDILQLLLDYGCQ, ADAL…EYST, and MDVAPVILAAHRNNYEILTMLLK. Positions 189, 193, 195, and 198 each coordinate Zn(2+). Positions 346 to 379 form an intramembrane region, discontinuously helical; sequence PTCKKIMTVLTVGIFWPVLSLCYLIAPKSQFGRI. Residues 380–386 are Cytoplasmic-facing; sequence IHTPFMK. Residues 387-404 traverse the membrane as a helical segment; the sequence is FIIHGASYFTFLLLLNLY. Residues 405-422 are Extracellular-facing; sequence SLVYHEDKKNTMGPALER. Residues 423–439 form a helical membrane-spanning segment; it reads IDYLLILWIIGMIWSDI. Topologically, residues 440–455 are cytoplasmic; that stretch reads KRLWYEGLEDFLEESR. The chain crosses the membrane as a helical span at residues 456-475; the sequence is NQLSFVMNSLYLATFALKEE. Over 476–496 the chain is Extracellular; sequence AHNKFHDFADRKDWDAFHPTL. Residues 497–517 traverse the membrane as a helical segment; sequence VAEGLFAFANVLSYLRLFFYV. Residues 518–536 lie on the Cytoplasmic side of the membrane; that stretch reads YTSSILGPLQISMGRMLQD. Residues 537–558 form a helical membrane-spanning segment; it reads FGKFLGMFLLVLFSFTIGLTQL. Residues 559–623 lie on the Extracellular side of the membrane; the sequence is YDKGYTPKEQ…GEELQSFVGA (65 aa). Cys-571 and Cys-576 are oxidised to a cystine. Residues 624–644 traverse the membrane as a helical segment; that stretch reads FIVGTYNVVVVIVLTKLLVAM. Residues 645–793 are Cytoplasmic-facing; that stretch reads LHKSFQLIAN…SKYAMFYPRN (149 aa).

The protein belongs to the transient receptor (TC 1.A.4) family. STrpC subfamily. TRPC1 sub-subfamily. Heterotetramer with TRPC4 and/or TRPC5. Forms a heteromeric ion channel with TRPC4, with a 1:3 TRPC1:TRPC4 stoichiometry. Unlike other TRP channel proteins, does not form a homomeric channel. Interacts with TRPC4AP. Interacts with ITPR3. Interacts with MX1 and RNF24. Interacts with FKBP4. Interacts with PLSCR1. Interacts with PKD2L2. Forms a heterotetramer with PKD2 with a 2:2 stoichiometry; has distinct channel properties separate from PKD2 or TRPC1 homomers alone. Activation of PRKCA induces phosphorylation of TRPC1 and subsequent Ca2+ entry into cells.

The protein resides in the cell membrane. The catalysed reaction is Ca(2+)(in) = Ca(2+)(out). The enzyme catalyses Na(+)(in) = Na(+)(out). It catalyses the reaction Li(+)(in) = Li(+)(out). It carries out the reaction Cs(+)(in) = Cs(+)(out). Its activity is regulated as follows. May be operated by a phosphatidylinositol second messenger system activated by receptor tyrosine kinases or G-protein coupled receptors. Also activated by intracellular calcium store depletion. Functionally, forms a receptor-activated non-selective calcium permeant cation channel. Forms a heteromeric ion channel with TRPC4 or TRPC5 that has reduced calcium permeability compared to the homomeric TRPC4 or TRPC5 channel. Also permeable to monovalent ions including sodium, lithium and cesium ions. This is Short transient receptor potential channel 1 (TRPC1) from Bos taurus (Bovine).